The following is a 117-amino-acid chain: Small ribosomal subunit protein uS19c (117 aa).

It belongs to the universal ribosomal protein uS19 family.

The protein resides in the plastid. Functionally, protein S19 forms a complex with S13 that binds strongly to the 16S ribosomal RNA. The chain is Small ribosomal subunit protein uS19c (rps19) from Helicosporidium sp. subsp. Simulium jonesii (Green alga).